We begin with the raw amino-acid sequence, 254 residues long: Thiazole synthase (254 aa).

The active-site Schiff-base intermediate with DXP is lysine 95. Residues glycine 156, 182–183 (AG), and 204–205 (NT) each bind 1-deoxy-D-xylulose 5-phosphate.

It belongs to the ThiG family. In terms of assembly, homotetramer. Forms heterodimers with either ThiH or ThiS.

The protein resides in the cytoplasm. It carries out the reaction [ThiS sulfur-carrier protein]-C-terminal-Gly-aminoethanethioate + 2-iminoacetate + 1-deoxy-D-xylulose 5-phosphate = [ThiS sulfur-carrier protein]-C-terminal Gly-Gly + 2-[(2R,5Z)-2-carboxy-4-methylthiazol-5(2H)-ylidene]ethyl phosphate + 2 H2O + H(+). The protein operates within cofactor biosynthesis; thiamine diphosphate biosynthesis. Functionally, catalyzes the rearrangement of 1-deoxy-D-xylulose 5-phosphate (DXP) to produce the thiazole phosphate moiety of thiamine. Sulfur is provided by the thiocarboxylate moiety of the carrier protein ThiS. In vitro, sulfur can be provided by H(2)S. This is Thiazole synthase from Vibrio atlanticus (strain LGP32) (Vibrio splendidus (strain Mel32)).